Consider the following 394-residue polypeptide: Elongation factor Tu (394 aa).

Positions 10 to 204 constitute a tr-type G domain; the sequence is KPHVNVGTIG…ALDTYIPEPE (195 aa). A G1 region spans residues 19-26; sequence GHVDHGKT. 19–26 is a GTP binding site; it reads GHVDHGKT. Position 26 (T26) interacts with Mg(2+). The interval 60 to 64 is G2; sequence GITIN. The tract at residues 81–84 is G3; sequence DCPG. GTP is bound by residues 81–85 and 136–139; these read DCPGH and NKCD. The G4 stretch occupies residues 136-139; that stretch reads NKCD. Positions 174–176 are G5; the sequence is SAL.

The protein belongs to the TRAFAC class translation factor GTPase superfamily. Classic translation factor GTPase family. EF-Tu/EF-1A subfamily. As to quaternary structure, monomer.

It localises to the cytoplasm. It carries out the reaction GTP + H2O = GDP + phosphate + H(+). Its function is as follows. GTP hydrolase that promotes the GTP-dependent binding of aminoacyl-tRNA to the A-site of ribosomes during protein biosynthesis. The polypeptide is Elongation factor Tu (Shewanella denitrificans (strain OS217 / ATCC BAA-1090 / DSM 15013)).